The primary structure comprises 111 residues: UPF0060 membrane protein xcc-b100_1273 (111 aa).

A run of 4 helical transmembrane segments spans residues 8–28, 34–54, 62–82, and 91–111; these read LLLF…PYLW, SVWL…LLTL, VYAA…WWVD, and LLGA…PRSG.

Belongs to the UPF0060 family.

Its subcellular location is the cell inner membrane. The polypeptide is UPF0060 membrane protein xcc-b100_1273 (Xanthomonas campestris pv. campestris (strain B100)).